Here is an 865-residue protein sequence, read N- to C-terminus: Alanine--tRNA ligase (865 aa).

4 residues coordinate Zn(2+): His-568, His-572, Cys-670, and His-674.

Belongs to the class-II aminoacyl-tRNA synthetase family. It depends on Zn(2+) as a cofactor.

It is found in the cytoplasm. The enzyme catalyses tRNA(Ala) + L-alanine + ATP = L-alanyl-tRNA(Ala) + AMP + diphosphate. Functionally, catalyzes the attachment of alanine to tRNA(Ala) in a two-step reaction: alanine is first activated by ATP to form Ala-AMP and then transferred to the acceptor end of tRNA(Ala). Also edits incorrectly charged Ser-tRNA(Ala) and Gly-tRNA(Ala) via its editing domain. This chain is Alanine--tRNA ligase, found in Vibrio campbellii (strain ATCC BAA-1116).